We begin with the raw amino-acid sequence, 159 residues long: Ribosomal RNA large subunit methyltransferase H (159 aa).

S-adenosyl-L-methionine-binding positions include L76, G108, and 127–132 (FSKMTF).

The protein belongs to the RNA methyltransferase RlmH family. As to quaternary structure, homodimer.

The protein localises to the cytoplasm. The enzyme catalyses pseudouridine(1915) in 23S rRNA + S-adenosyl-L-methionine = N(3)-methylpseudouridine(1915) in 23S rRNA + S-adenosyl-L-homocysteine + H(+). Functionally, specifically methylates the pseudouridine at position 1915 (m3Psi1915) in 23S rRNA. This Lachnoclostridium phytofermentans (strain ATCC 700394 / DSM 18823 / ISDg) (Clostridium phytofermentans) protein is Ribosomal RNA large subunit methyltransferase H.